A 631-amino-acid chain; its full sequence is Pescadillo homolog (631 aa).

A BRCT domain is found at 321–414 (RLRNLFKGLK…QLLPTNKYFL (94 aa)). Disordered stretches follow at residues 450–469 (HAQS…EDDT) and 489–569 (EYKK…MVKP). Residues Ser453 and Ser457 each carry the phosphoserine modification. Acidic residues-rich tracts occupy residues 454-469 (DDES…EDDT) and 499-524 (VNED…EELD). Residues 510-541 (FDGEQESDEEEEELDEKTKRLQEEKKKMSVQS) are a coiled coil. A compositionally biased stretch (basic and acidic residues) spans 525-536 (EKTKRLQEEKKK). A compositionally biased stretch (basic residues) spans 543-552 (KVHKVNKRQL). Residues 553 to 562 (HKAEVDEHRL) show a composition bias toward basic and acidic residues.

Belongs to the pescadillo family.

The protein localises to the nucleus. It localises to the nucleolus. The protein resides in the nucleoplasm. Its function is as follows. Required for maturation of ribosomal RNAs and formation of the large ribosomal subunit. This chain is Pescadillo homolog, found in Drosophila mojavensis (Fruit fly).